The sequence spans 230 residues: MRVAVIVFPGSNADVDLFNAVEDVMGVPVDYVWHSDTDLSKYDAILLPGGFSYGDYLRCGAVARFSPVMEQVVKAADEGKLIMGICNGFQILTEVGLLPGALLRNRSLKFRCKLSELRVENNDTSFTRDFAAGEVIQIPIAHGEGNYYCDEETLAKLKANKQIVFRYHGENPNGSLEDIAGICNERGNVLGMMPHPERAVHSWMTSDDGRRMFTSILKTWREQNSVTTHA.

Residues 2-226 (RVAVIVFPGS…LKTWREQNSV (225 aa)) enclose the Glutamine amidotransferase type-1 domain. The active-site Nucleophile is the cysteine 86. Residues histidine 195 and glutamate 197 contribute to the active site.

Part of the FGAM synthase complex composed of 1 PurL, 1 PurQ and 2 PurS subunits.

The protein localises to the cytoplasm. It catalyses the reaction N(2)-formyl-N(1)-(5-phospho-beta-D-ribosyl)glycinamide + L-glutamine + ATP + H2O = 2-formamido-N(1)-(5-O-phospho-beta-D-ribosyl)acetamidine + L-glutamate + ADP + phosphate + H(+). The catalysed reaction is L-glutamine + H2O = L-glutamate + NH4(+). Its pathway is purine metabolism; IMP biosynthesis via de novo pathway; 5-amino-1-(5-phospho-D-ribosyl)imidazole from N(2)-formyl-N(1)-(5-phospho-D-ribosyl)glycinamide: step 1/2. In terms of biological role, part of the phosphoribosylformylglycinamidine synthase complex involved in the purines biosynthetic pathway. Catalyzes the ATP-dependent conversion of formylglycinamide ribonucleotide (FGAR) and glutamine to yield formylglycinamidine ribonucleotide (FGAM) and glutamate. The FGAM synthase complex is composed of three subunits. PurQ produces an ammonia molecule by converting glutamine to glutamate. PurL transfers the ammonia molecule to FGAR to form FGAM in an ATP-dependent manner. PurS interacts with PurQ and PurL and is thought to assist in the transfer of the ammonia molecule from PurQ to PurL. This is Phosphoribosylformylglycinamidine synthase subunit PurQ from Brevibacillus brevis (strain 47 / JCM 6285 / NBRC 100599).